The chain runs to 84 residues: Small ribosomal subunit protein uS17 (84 aa).

This sequence belongs to the universal ribosomal protein uS17 family. In terms of assembly, part of the 30S ribosomal subunit.

Its function is as follows. One of the primary rRNA binding proteins, it binds specifically to the 5'-end of 16S ribosomal RNA. In Borrelia duttonii (strain Ly), this protein is Small ribosomal subunit protein uS17.